Here is a 105-residue protein sequence, read N- to C-terminus: ATP-dependent Clp protease adapter protein ClpS (105 aa).

This sequence belongs to the ClpS family. As to quaternary structure, binds to the N-terminal domain of the chaperone ClpA.

Involved in the modulation of the specificity of the ClpAP-mediated ATP-dependent protein degradation. This is ATP-dependent Clp protease adapter protein ClpS from Aeromonas salmonicida (strain A449).